Consider the following 294-residue polypeptide: Endonuclease 3 (294 aa).

The first 24 residues, 1–24 (MGWSLRMWIVSILVLTQLVNGALC), serve as a signal peptide directing secretion. The a divalent metal cation site is built by W25 and H30. 25–30 (WGDAGH) serves as a coordination point for substrate. C34 and C65 are joined by a disulfide. A divalent metal cation-binding residues include D69 and H84. Substrate contacts are provided by residues 69-75 (DEIKKLP), 84-87 (HFAD), and 94-99 (NYEYSR). 3 cysteine pairs are disulfide-bonded: C93/C241, C101/C106, and C221/C228. Positions 113 and 131 each coordinate substrate. N-linked (GlcNAc...) asparagine glycosylation occurs at N113. N-linked (GlcNAc...) asparagine glycosylation occurs at N132. A divalent metal cation is bound by residues H142, D146, H152, H176, and D180. Positions 142–191 (HYMGDIHQPLHEGFIGDLGGNKIKVHWYNQETNLHRVWDDMIIESALETY) are substrate binding. N-linked (GlcNAc...) asparagine glycosylation is found at N193, N224, and N247. Positions 279–294 (GTLNRIFSAKRKLARA) are cleaved as a propeptide — removed in mature form.

It belongs to the nuclease type I family. In terms of assembly, monomer. Requires Zn(2+) as cofactor. Mn(2+) serves as cofactor.

It carries out the reaction Endonucleolytic cleavage to 5'-phosphomononucleotide and 5'-phosphooligonucleotide end-products.. In terms of biological role, endonuclease that can use RNA and single-stranded DNA as substrates. In contradiction with PubMed:23620482, cannot hydrolyze single-stranded DNA and does not cleave mismatches. This chain is Endonuclease 3, found in Arabidopsis thaliana (Mouse-ear cress).